The primary structure comprises 466 residues: Soluble pyridine nucleotide transhydrogenase (466 aa).

FAD is bound at residue 36–45 (ERYQNVGGGC).

It belongs to the class-I pyridine nucleotide-disulfide oxidoreductase family. It depends on FAD as a cofactor.

It is found in the cytoplasm. It catalyses the reaction NAD(+) + NADPH = NADH + NADP(+). Its function is as follows. Conversion of NADPH, generated by peripheral catabolic pathways, to NADH, which can enter the respiratory chain for energy generation. The polypeptide is Soluble pyridine nucleotide transhydrogenase (Escherichia coli O9:H4 (strain HS)).